A 314-amino-acid polypeptide reads, in one-letter code: MSFASEMKNELTRIDVEEMNAKAELSALIRMNGALSLSNQQFVINVQTENATTARRIYSLIKRVFNVEVEILVRKKMKLKKNNIYICRTKMKAKEILDELGILKDGIFTHEIDHSMIQDDEMRRSYLRGAFLAGGSVNNPETSSYHLEIFSQNESHAEGLTKLMNSYELNAKHLERKKGSITYLKEAEKISDFLSLIGGYQALLKFEDVRIVRDMRNSVNRLVNCETANLNKTVSAAMKQVESIKLIDKEIGIENLPDRLREIARIRVEHQEISLKELGEMVSTGPISKSGVNHRLRKLNDLADKIRNGEQIEL.

The H-T-H motif DNA-binding region spans 274–308; sequence SLKELGEMVSTGPISKSGVNHRLRKLNDLADKIRN.

The protein belongs to the WhiA family.

Its function is as follows. Involved in cell division and chromosome segregation. The protein is Probable cell division protein WhiA of Staphylococcus aureus (strain USA300).